The chain runs to 70 residues: U2-agatoxin-Ao1j (70 aa).

Positions 1–20 (MRAIISLLLISAMVFSMIAA) are cleaved as a signal peptide. Residues 21–34 (VPEEEGLQLSEDER) constitute a propeptide that is removed on maturation. Disulfide bonds link cysteine 37–cysteine 53, cysteine 44–cysteine 58, and cysteine 52–cysteine 68. Leucine 69 is modified (leucine amide).

This sequence belongs to the neurotoxin 01 (U2-agtx) family. As to expression, expressed by the venom gland.

The protein resides in the secreted. Functionally, insect active toxin causing rapid but reversible paralysis in crickets. No activity shown in mammals. Does not show effect on mammalian voltage-gated calcium channels. This Agelena orientalis (Funnel-web spider) protein is U2-agatoxin-Ao1j.